The chain runs to 319 residues: Inactive hydroxysteroid dehydrogenase-like protein 1 (319 aa).

The segment at 2 to 82 (AAVDSFQLLY…CGASEAIAKA (81 aa)) is required for mitochondria translocation. NADP(+) is bound by residues 74–80 (GASEAIA), K99, and D125.

This sequence belongs to the short-chain dehydrogenases/reductases (SDR) family. 17-beta-HSD 3 subfamily.

The protein localises to the mitochondrion. The chain is Inactive hydroxysteroid dehydrogenase-like protein 1 (hsdl1) from Danio rerio (Zebrafish).